We begin with the raw amino-acid sequence, 124 residues long: Thioredoxin domain-containing protein C21C3.12c (124 aa).

The 88-residue stretch at 37-124 (PWCPTVRAAL…ANKFSKFIDI (88 aa)) folds into the Thioredoxin domain. The Nucleophile role is filled by cysteine 39.

Belongs to the thioredoxin family.

The protein localises to the cytoplasm. The protein resides in the nucleus. This chain is Thioredoxin domain-containing protein C21C3.12c, found in Schizosaccharomyces pombe (strain 972 / ATCC 24843) (Fission yeast).